The chain runs to 282 residues: Bifunctional protein FolD (282 aa).

NADP(+) contacts are provided by residues 166–168 (GRS) and Ser191.

This sequence belongs to the tetrahydrofolate dehydrogenase/cyclohydrolase family. As to quaternary structure, homodimer.

The enzyme catalyses (6R)-5,10-methylene-5,6,7,8-tetrahydrofolate + NADP(+) = (6R)-5,10-methenyltetrahydrofolate + NADPH. The catalysed reaction is (6R)-5,10-methenyltetrahydrofolate + H2O = (6R)-10-formyltetrahydrofolate + H(+). It functions in the pathway one-carbon metabolism; tetrahydrofolate interconversion. Catalyzes the oxidation of 5,10-methylenetetrahydrofolate to 5,10-methenyltetrahydrofolate and then the hydrolysis of 5,10-methenyltetrahydrofolate to 10-formyltetrahydrofolate. This chain is Bifunctional protein FolD, found in Acidovorax sp. (strain JS42).